A 341-amino-acid chain; its full sequence is 4-hydroxy-2-oxovalerate aldolase (341 aa).

A Pyruvate carboxyltransferase domain is found at 9-259 (VRITEVCLRD…KLDIDLYKMM (251 aa)). 17–18 (RD) serves as a coordination point for substrate. Position 18 (Asp-18) interacts with Mn(2+). Catalysis depends on His-21, which acts as the Proton acceptor. Substrate-binding residues include Ser-171 and His-198. The Mn(2+) site is built by His-198 and His-200. Tyr-289 contacts substrate.

Belongs to the 4-hydroxy-2-oxovalerate aldolase family.

It catalyses the reaction (S)-4-hydroxy-2-oxopentanoate = acetaldehyde + pyruvate. In Bacillus thuringiensis (strain Al Hakam), this protein is 4-hydroxy-2-oxovalerate aldolase.